The sequence spans 257 residues: 3-deoxy-manno-octulosonate cytidylyltransferase (257 aa).

It belongs to the KdsB family.

Its subcellular location is the cytoplasm. The enzyme catalyses 3-deoxy-alpha-D-manno-oct-2-ulosonate + CTP = CMP-3-deoxy-beta-D-manno-octulosonate + diphosphate. The protein operates within nucleotide-sugar biosynthesis; CMP-3-deoxy-D-manno-octulosonate biosynthesis; CMP-3-deoxy-D-manno-octulosonate from 3-deoxy-D-manno-octulosonate and CTP: step 1/1. It participates in bacterial outer membrane biogenesis; lipopolysaccharide biosynthesis. Functionally, activates KDO (a required 8-carbon sugar) for incorporation into bacterial lipopolysaccharide in Gram-negative bacteria. The protein is 3-deoxy-manno-octulosonate cytidylyltransferase of Stenotrophomonas maltophilia (strain K279a).